Consider the following 230-residue polypeptide: PKHD-type hydroxylase XF_0598 (230 aa).

A Fe2OG dioxygenase domain is found at 78-182 (RTLPPRFNCY…RIASFFWVQS (105 aa)). His-96, Asp-98, and His-163 together coordinate Fe cation. Position 173 (Arg-173) interacts with 2-oxoglutarate.

Requires Fe(2+) as cofactor. It depends on L-ascorbate as a cofactor.

This is PKHD-type hydroxylase XF_0598 from Xylella fastidiosa (strain 9a5c).